Reading from the N-terminus, the 540-residue chain is CTP synthase (540 aa).

The tract at residues Met1–Lys264 is amidoligase domain. Residue Ser12 participates in CTP binding. Residue Ser12 coordinates UTP. Gly13–Thr18 provides a ligand contact to ATP. Tyr53 provides a ligand contact to L-glutamine. ATP is bound at residue Asp70. Residues Asp70 and Glu140 each coordinate Mg(2+). CTP-binding positions include Asp147–Glu149, Lys185–Gln190, and Arg221. Residues Lys185–Gln190 and Arg221 each bind UTP. Residues Tyr294 to Asn527 form the Glutamine amidotransferase type-1 domain. Gly347 lines the L-glutamine pocket. Cys374 serves as the catalytic Nucleophile; for glutamine hydrolysis. L-glutamine is bound by residues Leu375–Gln378, Glu398, and Arg455. Residues His500 and Glu502 contribute to the active site.

It belongs to the CTP synthase family. In terms of assembly, homotetramer.

The catalysed reaction is UTP + L-glutamine + ATP + H2O = CTP + L-glutamate + ADP + phosphate + 2 H(+). It catalyses the reaction L-glutamine + H2O = L-glutamate + NH4(+). It carries out the reaction UTP + NH4(+) + ATP = CTP + ADP + phosphate + 2 H(+). It participates in pyrimidine metabolism; CTP biosynthesis via de novo pathway; CTP from UDP: step 2/2. Its activity is regulated as follows. Allosterically activated by GTP, when glutamine is the substrate; GTP has no effect on the reaction when ammonia is the substrate. The allosteric effector GTP functions by stabilizing the protein conformation that binds the tetrahedral intermediate(s) formed during glutamine hydrolysis. Inhibited by the product CTP, via allosteric rather than competitive inhibition. Its function is as follows. Catalyzes the ATP-dependent amination of UTP to CTP with either L-glutamine or ammonia as the source of nitrogen. Regulates intracellular CTP levels through interactions with the four ribonucleotide triphosphates. This chain is CTP synthase, found in Thermoplasma volcanium (strain ATCC 51530 / DSM 4299 / JCM 9571 / NBRC 15438 / GSS1).